Consider the following 226-residue polypeptide: Deoxyribose-phosphate aldolase (226 aa).

Aspartate 96 (proton donor/acceptor) is an active-site residue. The active-site Schiff-base intermediate with acetaldehyde is the lysine 157. Lysine 185 functions as the Proton donor/acceptor in the catalytic mechanism.

This sequence belongs to the DeoC/FbaB aldolase family. DeoC type 1 subfamily.

It is found in the cytoplasm. It catalyses the reaction 2-deoxy-D-ribose 5-phosphate = D-glyceraldehyde 3-phosphate + acetaldehyde. The protein operates within carbohydrate degradation; 2-deoxy-D-ribose 1-phosphate degradation; D-glyceraldehyde 3-phosphate and acetaldehyde from 2-deoxy-alpha-D-ribose 1-phosphate: step 2/2. Functionally, catalyzes a reversible aldol reaction between acetaldehyde and D-glyceraldehyde 3-phosphate to generate 2-deoxy-D-ribose 5-phosphate. This Trichormus variabilis (strain ATCC 29413 / PCC 7937) (Anabaena variabilis) protein is Deoxyribose-phosphate aldolase.